We begin with the raw amino-acid sequence, 412 residues long: Cytochrome P450-SOY (412 aa).

Over residues 1-25 the composition is skewed to polar residues; that stretch reads MTESTTDPARQNLDPTSPAPATSFP. The tract at residues 1-38 is disordered; the sequence is MTESTTDPARQNLDPTSPAPATSFPQDRGCPYHPPAGY. Cys361 contributes to the heme binding site.

This sequence belongs to the cytochrome P450 family. Heme serves as cofactor.

It is found in the cytoplasm. The polypeptide is Cytochrome P450-SOY (cyp105D1) (Streptomyces griseus).